The sequence spans 113 residues: MREWINQSKIDLLAKEIGEENVPILVNIFLGELNDYQSKLVSDTVADKLGYLKEISHALKSSAASFGADRLCAKAVELDSRAKSGEMMDISLEVEHMLELLKQTHQCYSDLVH.

Positions 18 to 113 (GEENVPILVN…THQCYSDLVH (96 aa)) constitute an HPt domain. Residue His57 is modified to Phosphohistidine.

As to quaternary structure, monomer.

Functionally, phosphorelay protein which receives sensory signals from a sensory kinase and transmit them to LuxO. At low cell density, a phosphoryl group is transferred from the sensory kinase, probably on His-57 and this phosphoryl group is further transferred to LuxO. This is Phosphorelay protein LuxU (luxU) from Vibrio cholerae serotype O1 (strain ATCC 39315 / El Tor Inaba N16961).